Reading from the N-terminus, the 500-residue chain is Glycerol kinase (500 aa).

Threonine 12 contacts ADP. The ATP site is built by threonine 12, threonine 13, and serine 14. Residue threonine 12 participates in sn-glycerol 3-phosphate binding. Arginine 16 provides a ligand contact to ADP. The sn-glycerol 3-phosphate site is built by arginine 82, glutamate 83, tyrosine 135, and aspartate 245. Residues arginine 82, glutamate 83, tyrosine 135, aspartate 245, and glutamine 246 each coordinate glycerol. The ADP site is built by threonine 267 and glycine 310. The ATP site is built by threonine 267, glycine 310, glutamine 314, and glycine 411. ADP-binding residues include glycine 411 and asparagine 415.

It belongs to the FGGY kinase family. As to quaternary structure, homotetramer and homodimer (in equilibrium).

The catalysed reaction is glycerol + ATP = sn-glycerol 3-phosphate + ADP + H(+). Its pathway is polyol metabolism; glycerol degradation via glycerol kinase pathway; sn-glycerol 3-phosphate from glycerol: step 1/1. Activated by phosphorylation and inhibited by fructose 1,6-bisphosphate (FBP). Its function is as follows. Key enzyme in the regulation of glycerol uptake and metabolism. Catalyzes the phosphorylation of glycerol to yield sn-glycerol 3-phosphate. In Clostridium perfringens (strain 13 / Type A), this protein is Glycerol kinase.